A 267-amino-acid chain; its full sequence is Sorbitol-6-phosphate 2-dehydrogenase (267 aa).

Residue 9–38 (DNVIIVTGGASGIGLAIVDELLSQGAHVQM) participates in NAD(+) binding. Ser-147 contacts substrate. The Proton acceptor role is filled by Tyr-160.

This sequence belongs to the short-chain dehydrogenases/reductases (SDR) family. In terms of assembly, homotetramer.

It carries out the reaction D-sorbitol 6-phosphate + NAD(+) = beta-D-fructose 6-phosphate + NADH + H(+). It participates in carbohydrate metabolism; D-sorbitol degradation; D-fructose 6-phosphate from D-sorbitol 6-phosphate: step 1/1. This chain is Sorbitol-6-phosphate 2-dehydrogenase (sorD), found in Klebsiella pneumoniae.